Here is a 97-residue protein sequence, read N- to C-terminus: Large ribosomal subunit protein bL27 (97 aa).

The propeptide occupies 1-9 (MFTFDLQLF).

It belongs to the bacterial ribosomal protein bL27 family. The N-terminus is cleaved by ribosomal processing cysteine protease Prp.

The polypeptide is Large ribosomal subunit protein bL27 (Syntrophomonas wolfei subsp. wolfei (strain DSM 2245B / Goettingen)).